Reading from the N-terminus, the 182-residue chain is Ribosome-recycling factor (182 aa).

This sequence belongs to the RRF family.

The protein resides in the cytoplasm. Functionally, responsible for the release of ribosomes from messenger RNA at the termination of protein biosynthesis. May increase the efficiency of translation by recycling ribosomes from one round of translation to another. The sequence is that of Ribosome-recycling factor from Prochlorococcus marinus (strain MIT 9312).